Consider the following 833-residue polypeptide: Zinc phosphodiesterase ELAC protein 2 homolog (833 aa).

The transit peptide at 1–19 (MLGAIARKTVENRILVSRH) directs the protein to the mitochondrion. The span at 624 to 646 (LTPPGSPGGPPGKRPRLPSPHLP) shows a compositional bias: pro residues. The interval 624-652 (LTPPGSPGGPPGKRPRLPSPHLPPSRDVL) is disordered.

It belongs to the RNase Z family. In terms of assembly, homodimer. It depends on Zn(2+) as a cofactor. As to expression, highly expressed in the germline.

Its subcellular location is the mitochondrion. It is found in the nucleus. The enzyme catalyses Endonucleolytic cleavage of RNA, removing extra 3' nucleotides from tRNA precursor, generating 3' termini of tRNAs. A 3'-hydroxy group is left at the tRNA terminus and a 5'-phosphoryl group is left at the trailer molecule.. Zinc phosphodiesterase, which displays some tRNA 3'-processing endonuclease activity. Probably involved in tRNA maturation, by removing a 3'-trailer from precursor tRNA. Involved in germline proliferation. May be required for both mitosis and meiosis in germ cells. Functionally, does not regulate the mitochondrial unfolded protein response following mitochondrial stress. In terms of biological role, plays a role in mitochondrial unfolded protein response. Upon mitochondrial stress is exported from the nucleus where its tRNA endonuclease activity is negatively regulated. In response to mitochondrial stress, might be involved in activating a transcriptional response in an ATFS-1- and DVE-1-dependent manner. May play a role in negatively regulating the mitochondrial membrane potential. The sequence is that of Zinc phosphodiesterase ELAC protein 2 homolog from Caenorhabditis elegans.